A 510-amino-acid polypeptide reads, in one-letter code: uncharacterized protein (510 aa).

This sequence belongs to the phage portal family. PBSX subfamily.

This is an uncharacterized protein from Bacillus subtilis (strain 168).